A 2230-amino-acid chain; its full sequence is MFMMMNMSKQGIFQTVGSGLDHILSLADVEEEQMIQSVDRTAVTGASYFTSVDQSSVHTAEVGAHQTEPLKTSVDKPGSKKTQGEKFFLIHSADWLTTHALFHEVAKLDVVSLLYNEQFAVQGLLRYHTYARFGIEIQVQINPTPFQQGGLICAMVPGDQGYGSIASLTVYPHGLLNCNINNVVRIKVPFIYTRGAYHFKDPQYPVWELTIRVWSELNIGTGTSAYTSLNVLARFTDLELHGLTPLSTQMMRNEFRVSTTENVVNLSNYEDARAKMSFALDQEDWKTDPSQGGGIKITHFTTWTSIPTLAAQFAFNASASVGQQIKVIPVDPYFYQMTNSNPDQKCITALASVCQMFCFWRGDLVFDFQVFPTKYHSGRLLFCFVPGNELIDVSGITLKQATTAPCAVMDITGVQSTLRFRVPWISDTPYRVNRYTKSAHQKGEYTAIGKLIVYCYNRLTSPSNVASHVRVNVYLSAINLECFAPLYHAMDVTSQTGDDSGGFSTTVSTEQNAPDPQVGITTIKDLKGKANRGKMDVSGIQAPVGAITTIEDPVLAKKVPETFPELRPGESRHTSDHMSIYKFMGRSHFLCTFTFNANNREYTFPITLSSTSNPPHGLPSTLRWFFNLFQLYRGPLDLTIIITGATDVDGMAWFTPVGLAVDTPWVEKQSALTIDYKTALGAIRFNTRRTGNIQIRLPWYSYLYAVSGALDGLGDTTDSTFGLVSIQIANYNHSDEYLSFSCYLSVTEQSEFYFPRAPLNSNAMMVSESMLDRIASGDLESSVDDPRSAEDKRFESHIEQGKPYKELRMEVGKQRLKYAMEELSNEILPPPRKVKGLFSQAKISLFYTEDHEIVKLSWKGLTADTRALRRYGFSLAAGRSVWTLEMEAGVLTGRMIRLNDEKWTEIKDDKIVALVEKFTSNKNWSKVNFPHGMLDLEEIASNSKDFPNMSETDLCFLLHWLNPKKINLADRMLGLSGVQEIKEQGVGLIAECRTFLDSIAGTLKSMMFGFHQSVTVEIINTVLCFVKSGILLYVIQQLNQNEHSHIIGLLQVMNYADIGCSVISCGKIFSKMLETVFNWQMDSRMMALRTQSFSNWLRDICSGITIFKNFKDAIFWLYTKLKDYYDSNYGKKKDVLNVLKENQHRIEKAIEEADQFCVLQIQDVEKSEQYQKGVELIQKLRTVHSLAQVDSSLMSHLSPLRDCIARVHQKLKNLGSINQAMVTRCEPVVCYLYGKRGGGKSLTSIALATKICKHYGVEPEKNIYTKPVASDYWDGYSGQLVCIIDDIGQNTTDEDWSDFCQLVSGCPMRLNMASLEEKGRHFSSPFIIATSNWSNPSPKTVYVKEAIDRRLHYKIEVKPASFYKNAHNDMLNVNLARNNDAIKDMSCVDLLMDGHTVSLSELLNSLVMTVEIRKQNMSEFMKLWSQGVSDDDNDSAVAEFFQSFPSGEPSNSKLSSFFKAVTNHKWVAIGAAVGVLGVLVGGWFVYKHFTKEEPIPTEGVYHGVTKPKQVIKLDADPVDSQSTLEIAGLVRKNLVQFGVGEKNGCVRWVMNALGIKDDWLLVPSHAYKFEKDYQMMEFYFNRGGTYYSISAGNVVIQSLDVGFQDVVLMKVPTIPKFRDITEHFIKKNDVPRALNRLATLVTTVNGTPMLISEGPLKMEEKATYVHKRNDGTTVDLTVDQAWRGKGEGLPGMCGGALISSNQSIQNAILGIHVAGGNSILVAKLVTQEMFQNIEQKAIESQRIMKVEFTQCSMNVVSKTLFKKSPIHHHIDRNMINFPAVMPFSKAEIDPMAVMLSKYSLPIVEEPDDYKMASIYFQNKVMGKTFLVDDFLDIDMAITGAPGIDAINMDSSPGFPYVQEKLTKKDLIWLDENGLLLGVHPRLAQRILYNTVMMENCSDLDVVFTTCPKDELRPLDKVLESKTRAIDACPLDYTILCRIYWGPAISYFQLNPGFHTGVAIGIDPDRHWDELFKTMVRFGDVGLDLDFSSFDASLSPFMIREAGRILSEMSGTPSHFGEALINTIIYSKHLLYNCCYHVYGSMPSGSPCTALLNSIVNNVNLYYVFSKIFRKSPVFFGDALKILCYGDDVLIVFSRNVQIDNLESIGQKIVDEFGKLGMTATSADKSVPKLKPISELTFLKRSFNLVEDRIRPAISEKTIWSLVAWQRSNAEFEQNLENAQWFAFMHGFEFYQKFYHFVQSCLEKEMVEYRLKSYDWWRMKFYDQCFVCDLT.

The tract at residues 59-80 (TAEVGAHQTEPLKTSVDKPGSK) is disordered. Short sequence motifs ((L)YPX(n)L motif) lie at residues 171–175 (YPHGL) and 204–209 (YPVWEL). The segment at 770–840 (MLDRIASGDL…PRKVKGLFSQ (71 aa)) is involved in P1-2A pentamerization. A helical membrane pass occupies residues 1015–1035 (TVEIINTVLCFVKSGILLYVI). Residues 1047–1074 (IGLLQVMNYADIGCSVISCGKIFSKMLE) form a membrane-penetrating ability region. Residues 1131-1156 (KKKDVLNVLKENQHRIEKAIEEADQF) are a coiled coil. Positions 1208–1370 (HQKLKNLGSI…SFYKNAHNDM (163 aa)) constitute an SF3 helicase domain. 1234–1241 (GKRGGGKS) provides a ligand contact to ATP. Residues 1466–1486 (WVAIGAAVGVLGVLVGGWFVY) form a helical membrane-spanning segment. Residue Tyr1501 is modified to O-(5'-phospho-RNA)-tyrosine. The Peptidase C3 domain occupies 1516–1730 (DPVDSQSTLE…VAKLVTQEMF (215 aa)). Active-site for protease 3C activity residues include His1565, Asp1605, and Cys1693. Positions 1979 to 2100 (DVGLDLDFSS…VFSRNVQIDN (122 aa)) constitute a RdRp catalytic domain.

It belongs to the picornaviridae polyprotein family. In terms of assembly, homodimer. Homomultimer; probably interacts with membranes in a multimeric form. Seems to assemble into amyloid-like fibers. As to quaternary structure, homodimer. Monomer. Interacts with protein 3CD. Interacts with host ACBD3. In terms of assembly, interacts with protein 3AB. As to quaternary structure, interacts with human MAVS. Homodimer; disulfide-linked. In terms of assembly, homopentamer. Homooligomer. As to quaternary structure, interacts with capsid protein VP2. Interacts with capsid protein VP3. Interacts with capsid protein VP1. Interacts with capsid protein VP3. In terms of assembly, interacts with capsid protein VP1. Interacts with capsid protein VP2. Specific enzymatic cleavages by viral protease in vivo yield a variety of precursors and mature proteins. Polyprotein processing intermediates are produced, such as P1-2A which is a functional precursor of the structural proteins, VP0 which is a VP4-VP2 precursor, VP1-2A precursor, 3ABC precursor which is a stable and catalytically active precursor of 3A, 3B and 3C proteins, 3AB and 3CD precursors. The assembly signal 2A is removed from VP1-2A by a host protease, possibly host Cathepsin L. This cleavage occurs over a region of 3 amino-acids probably generating VP1 proteins with heterogeneous C-termini. In terms of processing, during virion maturation, immature virions are rendered infectious following cleavage of VP0 into VP4 and VP2. This maturation seems to be an autocatalytic event triggered by the presence of RNA in the capsid and is followed by a conformational change of the particle. Post-translationally, the assembly signal 2A is removed from VP1-2A by a host protease, possibly host Cathepsin L in naked virions. This cleavage does not occur in enveloped virions. This cleavage occurs over a region of 3 amino-acids probably generating VP1 proteins with heterogeneous C-termini. VPg is uridylylated prior to priming replication into VPg-pUpU. In terms of processing, unlike other picornaviruses, does not seem to be myristoylated.

It is found in the virion. It localises to the host endosome. The protein localises to the host multivesicular body. The protein resides in the host membrane. Its subcellular location is the host mitochondrion outer membrane. It is found in the host cytoplasm. It localises to the host cytoplasmic vesicle membrane. It carries out the reaction RNA(n) + a ribonucleoside 5'-triphosphate = RNA(n+1) + diphosphate. The catalysed reaction is a ribonucleoside 5'-triphosphate + H2O = a ribonucleoside 5'-diphosphate + phosphate + H(+). The enzyme catalyses Selective cleavage of Gln-|-Gly bond in the poliovirus polyprotein. In other picornavirus reactions Glu may be substituted for Gln, and Ser or Thr for Gly.. Functionally, capsid proteins VP1, VP2, and VP3 form a closed capsid enclosing the viral positive strand RNA genome. All these proteins contain a beta-sheet structure called beta-barrel jelly roll. Together they form an icosahedral capsid (T=3) composed of 60 copies of each VP1, VP2, and VP3, with a diameter of approximately 300 Angstroms. VP1 is situated at the 12 fivefold axes, whereas VP2 and VP3 are located at the quasi-sixfold axes. The naked capsid interacts with the host receptor HAVCR1 to provide virion attachment to and probably entry into the target cell. Its function is as follows. VP0 precursor is a component of the immature procapsids. In terms of biological role, plays a role in the assembly of the 12 pentamers into an icosahedral structure. Has not been detected in mature virions, supposedly owing to its small size. Precursor component of immature procapsids that corresponds to an extended form of the structural protein VP1. After maturation, possibly by the host Cathepsin L, the assembly signal 2A is cleaved to give rise to the mature VP1 protein. Functionally, functions as a viroporin. Affects membrane integrity and causes an increase in membrane permeability. Involved in host intracellular membrane rearrangements probably to give rise to the viral factories. Does not disrupt calcium homeostasis or glycoprotein trafficking. Antagonizes the innate immune response of the host by suppressing IFN-beta synthesis, which it achieves by interfering with the RIG-I/IFIH1 pathway. Its function is as follows. Affects membrane integrity and causes an increase in membrane permeability. In terms of biological role, associates with and induces structural rearrangements of intracellular membranes. Displays RNA-binding activity. The precursor 3ABC is targeted to the mitochondrial membrane where protease 3C activity cleaves and inhibits the host antiviral protein MAVS, thereby disrupting activation of IRF3 through the IFIH1/MDA5 pathway. In vivo, the protease activity of 3ABC precursor is more efficient in cleaving the 2BC precursor than that of protein 3C. The 3ABC precursor may therefore play a role in the proteolytic processing of the polyprotein. Possible viroporin. Functionally, interacts with the 3CD precursor and with RNA structures found at both the 5'- and 3'-termini of the viral genome. Since the 3AB precursor contains the hydrophobic domain 3A, it probably anchors the whole viral replicase complex to intracellular membranes on which viral RNA synthesis occurs. Its function is as follows. May serve as membrane anchor to the 3AB and 3ABC precursors via its hydrophobic domain. May interact with RNA. In terms of biological role, acts as a primer for viral RNA replication and remains covalently bound to viral genomic RNA. VPg is uridylylated prior to priming replication into VPg-pUpU. The VPg-pUpU is then used as primer on the genomic RNA poly(A) by the RNA-dependent RNA polymerase to replicate the viral genome. Cysteine protease that generates mature viral proteins from the precursor polyprotein. In addition to its proteolytic activity, it binds to viral RNA, and thus influences viral genome replication. RNA and substrate bind cooperatively to the protease. Cleaves IKBKG/NEMO to impair innate immune signaling. Cleaves host PABPC1 which may participate in the switch of viral translation to RNA synthesis. Functionally, interacts with the 3AB precursor and with RNA structures found at both the 5'- and 3'-termini of the viral genome. Disrupts TLR3 signaling by degrading the host adapter protein TICAM1/TRIF. Its function is as follows. RNA-directed RNA polymerase 3D-POL replicates genomic and antigenomic RNA by recognizing replications specific signals. This chain is Genome polyprotein, found in Callithrix (Owl-faced monkey).